We begin with the raw amino-acid sequence, 396 residues long: Probable glucan endo-1,6-beta-glucosidase B (396 aa).

A signal peptide spans Met1 to Ala17. Asn30 is a glycosylation site (N-linked (GlcNAc...) asparagine). The active-site Proton donor is Glu219. Asn272 carries an N-linked (GlcNAc...) asparagine glycan. Glu320 acts as the Nucleophile in catalysis.

Belongs to the glycosyl hydrolase 5 (cellulase A) family.

It is found in the secreted. The enzyme catalyses Random hydrolysis of (1-&gt;6)-linkages in (1-&gt;6)-beta-D-glucans.. Beta-glucanases participate in the metabolism of beta-glucan, the main structural component of the cell wall. Acts on lutean, pustulan and 1,6-oligo-beta-D-glucosides. The sequence is that of Probable glucan endo-1,6-beta-glucosidase B (exgB) from Aspergillus fumigatus (strain ATCC MYA-4609 / CBS 101355 / FGSC A1100 / Af293) (Neosartorya fumigata).